Consider the following 69-residue polypeptide: Pancreatic propolypeptide YG (69 aa).

The protein belongs to the NPY family.

It is found in the secreted. This chain is Pancreatic propolypeptide YG, found in Lophius americanus (American angler).